Consider the following 448-residue polypeptide: Binary larvicide subunit BinB (448 aa).

A beta-trefoil domain region spans residues 1–198 (MCDSKDNSGV…TAFVNSSFYA (198 aa)). A disulfide bond links cysteine 67 and cysteine 161. The interval 199-448 (AAIPQLPQTS…NEELIPKINQ (250 aa)) is probable pore-forming domain.

This sequence belongs to the toxin_10 family. Forms a heterodimer with BinA. Upon toxin crystal solubilization with NaOH at pH 12, only the 63-kDa (binB) and 43-kDa (binA) proteins were detected. Interacts with mosquito protein Cpm1 which acts as its host receptor. In terms of processing, processed by proteases extracted from C.pipiens larval gut; unlike its partner BinA, it does not form a stable digestion product.

It is found in the spore. It localises to the perispore. Functionally, component of a binary toxin active against Culex and some Aedes mosquito larvae. This subunit alone has no toxic larvicidal activity. This subunit is responsible for localized binding to specific regions of the host larval gut. Binary toxin internalization into host gut cells requires both proteins. This Lysinibacillus sphaericus (Bacillus sphaericus) protein is Binary larvicide subunit BinB (binB).